The sequence spans 188 residues: dCTP deaminase (188 aa).

DCTP-binding positions include 111-116, 135-137, Q156, Y170, and Q180; these read KSTYAR and TLE. E137 serves as the catalytic Proton donor/acceptor.

Belongs to the dCTP deaminase family. As to quaternary structure, homotrimer.

The catalysed reaction is dCTP + H2O + H(+) = dUTP + NH4(+). Its pathway is pyrimidine metabolism; dUMP biosynthesis; dUMP from dCTP (dUTP route): step 1/2. Its function is as follows. Catalyzes the deamination of dCTP to dUTP. In Acidithiobacillus ferrooxidans (strain ATCC 23270 / DSM 14882 / CIP 104768 / NCIMB 8455) (Ferrobacillus ferrooxidans (strain ATCC 23270)), this protein is dCTP deaminase.